A 605-amino-acid polypeptide reads, in one-letter code: Putative glutaminase 2 (605 aa).

Substrate contacts are provided by Ser-213, Asn-262, Glu-308, Asn-315, Tyr-342, Tyr-394, and Val-412. ANK repeat units lie at residues 480 to 509 (DRLI…DLNT) and 513 to 543 (DDRT…DVDK). Positions 569–581 (KAMKRPEQHRKDS) are enriched in basic and acidic residues. Positions 569 to 605 (KAMKRPEQHRKDSVSSLDTDDEIDDDGFPEKPSFTID) are disordered. Acidic residues predominate over residues 586–595 (DTDDEIDDDG).

The protein belongs to the glutaminase family.

It catalyses the reaction L-glutamine + H2O = L-glutamate + NH4(+). This chain is Putative glutaminase 2 (glna-2), found in Caenorhabditis elegans.